The chain runs to 299 residues: Nucleotide-binding protein RER_30260 (299 aa).

19–26 (GLSGAGLS) is an ATP binding site. 70 to 73 (DVRS) serves as a coordination point for GTP.

The protein belongs to the RapZ-like family.

In terms of biological role, displays ATPase and GTPase activities. The protein is Nucleotide-binding protein RER_30260 of Rhodococcus erythropolis (strain PR4 / NBRC 100887).